We begin with the raw amino-acid sequence, 418 residues long: MPFLHGFRRIIFEYQPLVDAILGALGIQDLERQEPLDDSASSEESRILVLTELLEQKAHSPFYQEGVSNALLKMAELGLTRAAAVLLQSGANLNFEDPVTYYTALHIAVLRNQPDMVELLVRHGADINRRDRIHESSPLDLASEEPERLPCLQRLLDLGADVNAADKNGKTALLHALASSDGVQIHNTENIRLLLEGGADVKATTKDGDTVFTCIIFLLGETVCGDKEEAPMINRFCFQVTQLLLAHGADPSECPAHESLTHICLKSFKLHFPLLCFLLESGAAYNCSLHGASCWSGFNLVFERLCSHPGCAEDDSHIELLHKAETVLDLMVTSSQRLQLPENLNIHPVGSLAGKIQALHASLRQLESYPPPLKHLCRVSIRLCLRPWPVDTKVKALPLPDRLKWYLLSAHSDTQDTC.

6 ANK repeats span residues Glu65 to Phe95, Thr100 to Arg129, His134 to Ala164, Asn168 to Ala203, Cys224 to Glu253, and Glu258 to Cys287. The 56-residue stretch at Ala358 to Asp413 folds into the SOCS box domain.

Belongs to the ankyrin SOCS box (ASB) family. In terms of assembly, binds APS. Identified in a complex with ELOB and ELOC. Interacts with CUL5 and RNF7. Interacts with SQSTM1. Detected in adipocytes.

The protein localises to the cytoplasm. It functions in the pathway protein modification; protein ubiquitination. In terms of biological role, probable substrate-recognition component of a SCF-like ECS (Elongin-Cullin-SOCS-box protein) E3 ubiquitin-protein ligase complex which mediates the ubiquitination and subsequent proteasomal degradation of target proteins. May play a role in the regulation of cell proliferation and autophagy by promoting the ubiquitination and degradation of SQSTM1. This chain is Ankyrin repeat and SOCS box protein 6 (Asb6), found in Mus musculus (Mouse).